An 887-amino-acid chain; its full sequence is Chaperone protein ClpB 2 (887 aa).

In terms of domain architecture, Clp R spans 6–147 (PTKFTDKAWE…AATVKAIRGA (142 aa)). Repeat regions lie at residues 9–73 (FTDK…ARQQ) and 84–147 (CGRS…IRGA). Residues 160–342 (AALEKYGRDL…RRFQQVYIGQ (183 aa)) form an NBD1 region. 207–214 (GEPGVGKT) contacts ATP. The linker stretch occupies residues 343-559 (PSVEDTISIL…IAEIVAKWTG (217 aa)). Positions 393-535 (IDLVDEAAAK…TEAQLLELQA (143 aa)) form a coiled coil. The tract at residues 569 to 780 (ERQKLLQLEQ…RIDDVILFHG (212 aa)) is NBD2. 619-626 (GPTGVGKT) provides a ligand contact to ATP. The segment at 781–887 (LGRTELAQIA…TGDRDTVSAS (107 aa)) is C-terminal.

This sequence belongs to the ClpA/ClpB family. As to quaternary structure, homohexamer. The oligomerization is ATP-dependent.

The protein resides in the cytoplasm. Functionally, part of a stress-induced multi-chaperone system, it is involved in the recovery of the cell from heat-induced damage, in cooperation with DnaK, DnaJ and GrpE. Acts before DnaK, in the processing of protein aggregates. Protein binding stimulates the ATPase activity; ATP hydrolysis unfolds the denatured protein aggregates, which probably helps expose new hydrophobic binding sites on the surface of ClpB-bound aggregates, contributing to the solubilization and refolding of denatured protein aggregates by DnaK. This chain is Chaperone protein ClpB 2 (clpB2), found in Thermosynechococcus vestitus (strain NIES-2133 / IAM M-273 / BP-1).